A 409-amino-acid chain; its full sequence is MRVLLSTCGSRGDVEPLVALAVRLRARGAEVRMCAPPDCADRLAEVGVPHLPLGRSARPAAAGEAKPLTAEDMLRFTTETIAMQFDRIPAAAEGCDAVVTTGLLAAALGVRSVAEKLGIPYFYAFHCPSYVPSPYYAPPPPLGEPPAPEGTDIRALWERNNQSAFRRYGAPLKSQRAAIGLPPVEDIFEHGYTDHPWMAADQVLAPLQPTDLDAVQTGAWILPDERPLSPEMEAFLDAGTPPVYLGFGSLRAPADAAKVAIEAIRAHGRRVILSRGWADLVLPDDRDDCFATGEVNQQVLFRRVAAVIHHGGAGTTHVATRAGAPQILVPQIADQPYYAGRVAELGIGVAHDGPTPTFESLSAALTTALAPETRVRAEAVAGTVLTDGAAAAADLLFAAVGEEKPAVPA.

Belongs to the glycosyltransferase 28 family.

The protein operates within antibiotic biosynthesis; vancomycin biosynthesis. Functionally, D-glucosyltransferase that acts on the aglycone core, transferring D-glucose to the phenolic hydroxyl of OH-Phegly(4) to form a devancoaminyl-vancomycin (DVV) intermediate in the biosynthesis of glycopeptide antibiotic vancomycin. Also able to glycosylate A47934, an antibiotic with a teicoplanin-like heptapeptide, but lacking sugar residues. The chain is Glycosyltransferase GtfE (gtfE) from Amycolatopsis orientalis (Nocardia orientalis).